The sequence spans 200 residues: HTH-type transcriptional repressor KstR2 (200 aa).

An HTH tetR-type domain is found at 9 to 69 (NSRRGELLEL…ELLRGFLDWL (61 aa)). The segment at residues 32 to 51 (TVRDIADGAGILSGSLYHHF) is a DNA-binding region (H-T-H motif).

Homodimer.

Its function is as follows. Controls the expression of a small regulon that may play a role in the utilization of cholesterol. This chain is HTH-type transcriptional repressor KstR2 (kstR2), found in Mycobacterium tuberculosis (strain CDC 1551 / Oshkosh).